The following is a 952-amino-acid chain: Substrate-adhesion molecule (952 aa).

The first 25 residues, 1-25 (MKSQKIGSMILLIGILLAIFNFAYS), serve as a signal peptide directing secretion. The Extracellular segment spans residues 26–527 (DDDIERFSIN…TWFFDTNVET (502 aa)). N-linked (GlcNAc...) asparagine glycans are attached at residues N78, N182, N231, N243, and N412. The EGF-like domain occupies 438 to 471 (EIRRCKDSCNGYGTCNTANYTCVCDSAHMGETCN). 3 cysteine pairs are disulfide-bonded: C442–C452, C446–C459, and C461–C470. N-linked (GlcNAc...) asparagine glycosylation is present at N456. A helical membrane pass occupies residues 528–548 (GVIALACIFIAFVGILYIIDI). Over 549-591 (GTTVPIDIKRAKDYAEENKSGQFPKATHEEASVLWWRDQRSHK) the chain is Cytoplasmic. The helical transmembrane segment at 592-612 (AWTFMDQFQLISLVSHIGVVF) threads the bilayer. Residues 613–678 (PSRFISFTEY…GDLYLLPNIL (66 aa)) are Extracellular-facing. The chain crosses the membrane as a helical span at residues 679 to 699 (FWFGLLLGVFLVPLLLAYAII). The Cytoplasmic segment spans residues 700–722 (SFMESLIHWKEVVTNRLIHVLVR). Residues 723-743 (ILTFGYIGVLIAASFAMVTPL) traverse the membrane as a helical segment. Topologically, residues 744 to 752 (HDYRIIIPG) are extracellular. Residues 753–773 (AIIFVLYGIGLPIAIWFLLAV) traverse the membrane as a helical segment. The Cytoplasmic portion of the chain corresponds to 774 to 801 (PEARLHNPTFKQRFGCLYVHYKPKTDHR). The chain crosses the membrane as a helical span at residues 802 to 822 (FVVFMFIKRFIMAVIIGILSF). The Extracellular portion of the chain corresponds to 823 to 837 (KPMTNYPLTGTDLAV). Residues 838–858 (PIVQVVVIDIALIGYAVLLFI) form a helical membrane-spanning segment. Topologically, residues 859–868 (RKPYFDHYQL) are cytoplasmic. The chain crosses the membrane as a helical span at residues 869–889 (WLEYLLTAINIVTVSLSLTHI). Residues 890–897 (KSPSAAGE) lie on the Extracellular side of the membrane. Residues 898–918 (LIACLIQALALVACIAAYVVA) form a helical membrane-spanning segment. The Cytoplasmic segment spans residues 919–952 (WLQMRSSFIKKVKKYLCCCCKSSKSSGEIDLSKK).

It localises to the cell membrane. Involved in substrate adhesion, myosin-independent cytokinesis, organization of actin cytoskeleton, and phagocytosis. This Dictyostelium discoideum (Social amoeba) protein is Substrate-adhesion molecule (sadA).